A 100-amino-acid polypeptide reads, in one-letter code: NADH-quinone oxidoreductase subunit K (100 aa).

3 helical membrane-spanning segments follow: residues 4–24 (LQHGLILAAILFVLGLTGLLV), 28–48 (LLFMLISLEVMINAAALAFIV), and 60–80 (VMYILAISLAAAEASIGLALL).

Belongs to the complex I subunit 4L family. As to quaternary structure, NDH-1 is composed of 13 different subunits. Subunits NuoA, H, J, K, L, M, N constitute the membrane sector of the complex.

It is found in the cell inner membrane. The catalysed reaction is a quinone + NADH + 5 H(+)(in) = a quinol + NAD(+) + 4 H(+)(out). Its function is as follows. NDH-1 shuttles electrons from NADH, via FMN and iron-sulfur (Fe-S) centers, to quinones in the respiratory chain. The immediate electron acceptor for the enzyme in this species is believed to be ubiquinone. Couples the redox reaction to proton translocation (for every two electrons transferred, four hydrogen ions are translocated across the cytoplasmic membrane), and thus conserves the redox energy in a proton gradient. This Serratia proteamaculans (strain 568) protein is NADH-quinone oxidoreductase subunit K.